The primary structure comprises 441 residues: Zinc finger and BTB domain-containing protein 8A (441 aa).

One can recognise a BTB domain in the interval 24–92 (CDCSILVEGK…VYSGKLSLTG (69 aa)). Composition is skewed to polar residues over residues 143 to 170 (NGVE…SPEQ) and 178 to 196 (KSWN…TQQP). The segment at 143–251 (NGVERSSFYS…QSEEQAQIDA (109 aa)) is disordered. Residues Ser161 and Ser167 each carry the phosphoserine modification. Residues Lys178, Lys182, Lys191, and Lys199 each participate in a glycyl lysine isopeptide (Lys-Gly) (interchain with G-Cter in SUMO2) cross-link. Positions 198–208 (AKHEPRKESIK) are enriched in basic and acidic residues. Positions 234–243 (SDSSSHVSQS) are enriched in low complexity. 2 consecutive C2H2-type zinc fingers follow at residues 282–304 (FKCP…LRCH) and 310–333 (YPCQ…RTIH). A Glycyl lysine isopeptide (Lys-Gly) (interchain with G-Cter in SUMO2) cross-link involves residue Lys437.

Its subcellular location is the nucleus. Functionally, may be involved in transcriptional regulation. This is Zinc finger and BTB domain-containing protein 8A (ZBTB8A) from Homo sapiens (Human).